Here is a 112-residue protein sequence, read N- to C-terminus: UPF0329 protein ECU11_0080 (112 aa).

The protein belongs to the UPF0329 family.

The protein is UPF0329 protein ECU11_0080 of Encephalitozoon cuniculi (strain GB-M1) (Microsporidian parasite).